Consider the following 171-residue polypeptide: uncharacterized protein (171 aa).

This is an uncharacterized protein from Rhizobium etli.